The chain runs to 238 residues: MNNQNVDQNEIAKFEALASRWWDPTSEFKPLHDINPLRLNYIDERVSLAGKRALDVGCGGGLLSEGMALRGAHVTGIDMGEAPLSVAKLHGLESGVKVDYRQTTIEELARDPEHAGQYDVVTCLEMLEHVPDPASVIRACASMLKPGGHMFVSTINRNPKSFLFAIVGAEYVLNLLPKGTHEWKKFIRPSEMSDHLRHAGLEVRELTGMTYNPITKVYKLGRDVDVNYLMHARDTRED.

Residues R38, G57, D78, and L124 each coordinate S-adenosyl-L-methionine.

The protein belongs to the methyltransferase superfamily. UbiG/COQ3 family.

The catalysed reaction is a 3-demethylubiquinol + S-adenosyl-L-methionine = a ubiquinol + S-adenosyl-L-homocysteine + H(+). It catalyses the reaction a 3-(all-trans-polyprenyl)benzene-1,2-diol + S-adenosyl-L-methionine = a 2-methoxy-6-(all-trans-polyprenyl)phenol + S-adenosyl-L-homocysteine + H(+). The protein operates within cofactor biosynthesis; ubiquinone biosynthesis. O-methyltransferase that catalyzes the 2 O-methylation steps in the ubiquinone biosynthetic pathway. The polypeptide is Ubiquinone biosynthesis O-methyltransferase (Marinobacter nauticus (strain ATCC 700491 / DSM 11845 / VT8) (Marinobacter aquaeolei)).